The primary structure comprises 230 residues: Large ribosomal subunit protein uL3 (230 aa).

2 disordered regions span residues 125-149 (QAIG…SLGD) and 210-230 (PNPK…VKNE).

The protein belongs to the universal ribosomal protein uL3 family. Part of the 50S ribosomal subunit. Forms a cluster with proteins L14 and L19.

Functionally, one of the primary rRNA binding proteins, it binds directly near the 3'-end of the 23S rRNA, where it nucleates assembly of the 50S subunit. This is Large ribosomal subunit protein uL3 from Mesomycoplasma hyopneumoniae (strain J / ATCC 25934 / NCTC 10110) (Mycoplasma hyopneumoniae).